The following is a 183-amino-acid chain: MSSLIVKSLGSIVSIIARIFFFRRSRPVSNPRTTAHISYFRMSRKRPLSLQTVELKVRMCCTGCVRIVRNAISKLRGVDSVEVDKELGRVRVVGYVDRNKVLKAVRRAGKRAEFSPYPEPPLYFTSTQNYFVDPSKEFKESYNYYRHGYNGTEQHGNIPVGSRGDDRVSNMFNDDNVNACRLM.

Residues 50 to 113 form the HMA domain; sequence LQTVELKVRM…AVRRAGKRAE (64 aa). 2 residues coordinate a metal cation: Cys61 and Cys64. Cys180 carries the post-translational modification Cysteine methyl ester. Residue Cys180 is the site of S-farnesyl cysteine attachment. A propeptide spans 181–183 (removed in mature form); the sequence is RLM.

This sequence belongs to the HIPP family.

Its function is as follows. Heavy-metal-binding protein. The polypeptide is Heavy metal-associated isoprenylated plant protein 44 (Arabidopsis thaliana (Mouse-ear cress)).